A 69-amino-acid polypeptide reads, in one-letter code: Protein SlyX homolog (69 aa).

Belongs to the SlyX family.

This chain is Protein SlyX homolog, found in Pseudomonas aeruginosa (strain LESB58).